Here is a 228-residue protein sequence, read N- to C-terminus: METAVDKLEAMFQKAEADMEYMEKRLRLDFLTNVPENSAAEENPMKLLENLSAIKTRHAALCTQVQEIAAEQKQSMDAIRVHLDTTVQLVQQLQQTADVELPTVTETEQESAEFLGLSVNQNTIEVPMSMELPAQELPQSSREGEFEEVSEATLEAVPCSMRANVKLANLNAFYKQLHEYFSFRKNSGALSLPKMKQMNMKVSDAKLKTLQHLSLIELDMKGHVRLLL.

Belongs to the SKA2 family. In terms of assembly, component of the SKA complex, composed of ska1, ska2 and ska3.

The protein localises to the cytoplasm. The protein resides in the cytoskeleton. Its subcellular location is the spindle. It is found in the chromosome. It localises to the centromere. The protein localises to the kinetochore. Its function is as follows. Component of the SKA complex, a microtubule plus end-binding complex of the outer kinetochore that stabilizes spindle microtubule-kinetochore attachments, promotes alignment of chromosomes at the mitotic spindle equator (chromosome congression) and assists suppression of the spindle assembly checkpoint. Kinetochores, consisting of a centromere-associated inner segment and a microtubule-contacting outer segment, play a crucial role in chromosome segregation by mediating the physical connection between centromeric DNA and spindle microtubules. The outer kinetochore is made up of the ten-subunit KMN network complex, comprising the MIS12, NDC80 and KNL1 complexes, and auxiliary microtubule-associated components such as the SKA complex; together they connect the outer kinetochore with the inner kinetochore, bind microtubules, and mediate interactions with mitotic checkpoint proteins that delay anaphase until chromosomes are bioriented on the spindle. The SKA complex is loaded onto bioriented kinetochores and it facilitates chromosome congression by stabilizing microtubules together with MAPRE1, and end-on attachment of the NDC80 complex to depolymerizing spindle microtubules, thereby assisting the poleward-moving kinetochore in withstanding microtubule pulling forces. The complex associates with dynamic microtubule plus-ends and can track both depolymerizing and elongating microtubules. The complex recruits protein phosphatase 1 (PP1) to the kinetochore in prometaphase and metaphase, to oppose spindle assembly checkpoint signaling and promote the onset of anaphase. Binds directly to microtubules; but with a much lower affinity than SKA1. During meiosis the SKA complex stabilizes the meiotic spindle and is required for its migration to the cortex. This is SKA complex subunit 2 (ska2) from Salmo salar (Atlantic salmon).